Here is a 365-residue protein sequence, read N- to C-terminus: Quinone oxidoreductase-like protein 2 homolog (365 aa).

It belongs to the zinc-containing alcohol dehydrogenase family. Quinone oxidoreductase subfamily.

The chain is Quinone oxidoreductase-like protein 2 homolog from Nematostella vectensis (Starlet sea anemone).